A 599-amino-acid polypeptide reads, in one-letter code: Elongation factor 4 (599 aa).

Residues 4–186 enclose the tr-type G domain; it reads KFIRNFSIIA…AIIKHVPPPL (183 aa). GTP is bound by residues 16–21 and 133–136; these read DHGKST and NKID.

Belongs to the TRAFAC class translation factor GTPase superfamily. Classic translation factor GTPase family. LepA subfamily.

Its subcellular location is the cell membrane. The catalysed reaction is GTP + H2O = GDP + phosphate + H(+). Its function is as follows. Required for accurate and efficient protein synthesis under certain stress conditions. May act as a fidelity factor of the translation reaction, by catalyzing a one-codon backward translocation of tRNAs on improperly translocated ribosomes. Back-translocation proceeds from a post-translocation (POST) complex to a pre-translocation (PRE) complex, thus giving elongation factor G a second chance to translocate the tRNAs correctly. Binds to ribosomes in a GTP-dependent manner. The protein is Elongation factor 4 of Ureaplasma parvum serovar 3 (strain ATCC 27815 / 27 / NCTC 11736).